Here is a 387-residue protein sequence, read N- to C-terminus: Chaperone protein DnaJ (387 aa).

The region spanning 6–71 (DYYEILGVPR…EKRRKYDQFG (66 aa)) is the J domain. The CR-type zinc finger occupies 146-228 (GCEKEIPIYR…CGGTGTVRRQ (83 aa)). Positions 159, 162, 176, 179, 202, 205, 216, and 219 each coordinate Zn(2+). CXXCXGXG motif repeat units follow at residues 159-166 (CSVCGGSG), 176-183 (CQKCGGTG), 202-209 (CDACGGVG), and 216-223 (CRECGGTG).

It belongs to the DnaJ family. As to quaternary structure, homodimer. Zn(2+) is required as a cofactor.

The protein resides in the cytoplasm. In terms of biological role, participates actively in the response to hyperosmotic and heat shock by preventing the aggregation of stress-denatured proteins and by disaggregating proteins, also in an autonomous, DnaK-independent fashion. Unfolded proteins bind initially to DnaJ; upon interaction with the DnaJ-bound protein, DnaK hydrolyzes its bound ATP, resulting in the formation of a stable complex. GrpE releases ADP from DnaK; ATP binding to DnaK triggers the release of the substrate protein, thus completing the reaction cycle. Several rounds of ATP-dependent interactions between DnaJ, DnaK and GrpE are required for fully efficient folding. Also involved, together with DnaK and GrpE, in the DNA replication of plasmids through activation of initiation proteins. The polypeptide is Chaperone protein DnaJ (Caldicellulosiruptor saccharolyticus (strain ATCC 43494 / DSM 8903 / Tp8T 6331)).